The primary structure comprises 1375 residues: DNA-directed RNA polymerase subunit beta' (1375 aa).

Zn(2+) contacts are provided by cysteine 70, cysteine 72, cysteine 85, and cysteine 88. Mg(2+)-binding residues include aspartate 461, aspartate 463, and aspartate 465. Zn(2+)-binding residues include cysteine 797, cysteine 871, cysteine 878, and cysteine 881.

Belongs to the RNA polymerase beta' chain family. As to quaternary structure, the RNAP catalytic core consists of 2 alpha, 1 beta, 1 beta' and 1 omega subunit. When a sigma factor is associated with the core the holoenzyme is formed, which can initiate transcription. Mg(2+) is required as a cofactor. The cofactor is Zn(2+).

The catalysed reaction is RNA(n) + a ribonucleoside 5'-triphosphate = RNA(n+1) + diphosphate. DNA-dependent RNA polymerase catalyzes the transcription of DNA into RNA using the four ribonucleoside triphosphates as substrates. The sequence is that of DNA-directed RNA polymerase subunit beta' from Neorickettsia sennetsu (strain ATCC VR-367 / Miyayama) (Ehrlichia sennetsu).